A 100-amino-acid polypeptide reads, in one-letter code: Small ribosomal subunit protein uS14c (100 aa).

Belongs to the universal ribosomal protein uS14 family. Part of the 30S ribosomal subunit.

It localises to the plastid. Its subcellular location is the chloroplast. Functionally, binds 16S rRNA, required for the assembly of 30S particles. In Angiopteris evecta (Mule's foot fern), this protein is Small ribosomal subunit protein uS14c.